A 204-amino-acid polypeptide reads, in one-letter code: Pro-hevein (204 aa).

The first 17 residues, 1–17, serve as a signal peptide directing secretion; the sequence is MNIFIVVLLCLTGVAIA. The Chitin-binding type-1 domain occupies 18–60; it reads EQCGRQAGGKLCPNNLCCSQWGWCGSTDEYCSPDHNCQSNCKD. Disulfide bonds link Cys-20-Cys-35, Cys-29-Cys-41, Cys-34-Cys-48, and Cys-54-Cys-58. Positions 61-66 are excised as a propeptide; it reads SGEGVG. In terms of domain architecture, Barwin spans 68-189; it reads GSASNVLATY…VNYQFVDCGD (122 aa). 3 disulfide bridges follow: Cys-96–Cys-128, Cys-117–Cys-151, and Cys-131–Cys-187.

Post-translationally, proteolytically processed to yield the two chains of the mature protein. Laticifer.

In terms of biological role, N-acetyl-D-glucosamine / N-acetyl-D-neuraminic acid binding lectin. Can inhibit fungal growth. This is Pro-hevein (HEV1) from Hevea brasiliensis (Para rubber tree).